The following is a 139-amino-acid chain: Prostate-associated microseminoprotein (139 aa).

The signal sequence occupies residues 1–35 (MALRMLWAGQAKGILGGWRTICLVVSLFLQHPGVS). 5 disulfide bridges follow: Cys-38-Cys-78, Cys-46-Cys-69, Cys-64-Cys-100, Cys-67-Cys-77, and Cys-91-Cys-114. Residues 116-139 (GGGPDLEWGSANTPAPGASAPHSS) form a disordered region.

The protein belongs to the beta-microseminoprotein family.

Its subcellular location is the secreted. Functionally, acts as a ligand for C-C chemokine receptor CCR2. Signals through binding and activation of CCR2 and induces a strong chemotactic response and mobilization of intracellular calcium ions. Exhibits a chemotactic activity for monocytes and lymphocytes but not neutrophils. The protein is Prostate-associated microseminoprotein (Msmp) of Mus musculus (Mouse).